The primary structure comprises 263 residues: Uridylate kinase (263 aa).

29-32 contacts ATP; sequence KVSG. Gly71 provides a ligand contact to UMP. The ATP site is built by Gly72 and Arg76. UMP-binding positions include Asp91 and 152 to 159; that span reads TGNPFFTT. ATP-binding residues include Thr179, Gln180, Tyr185, and Asp188.

The protein belongs to the UMP kinase family. As to quaternary structure, homohexamer.

Its subcellular location is the cytoplasm. The enzyme catalyses UMP + ATP = UDP + ADP. The protein operates within pyrimidine metabolism; CTP biosynthesis via de novo pathway; UDP from UMP (UMPK route): step 1/1. Its activity is regulated as follows. Inhibited by UTP. In terms of biological role, catalyzes the reversible phosphorylation of UMP to UDP. This Maricaulis maris (strain MCS10) (Caulobacter maris) protein is Uridylate kinase.